Here is a 465-residue protein sequence, read N- to C-terminus: MSEALTPRQIVEKLDQFIVGQKEAKKAVAIALRNRYRRSLLDEKLRDEVVPKNILMIGPTGVGKTEIARRLAKLVGAPFVKVEATKFTEVGYVGRDVESMVRDLVETSVRLVKERKMNEVKDRAEQQANKRLVELLVPGKQKQTMKNPLELLFGGAQTSQQDTYQTYEDDHIEQKRRQVAWQLANGQLEDEMVTIEVEEQQPMFFDFLQGAGIEQMGMNMQDALSSLIPKRRKKRKLKVREARKVLTNEEAQKLIDMDEVTQEAIRLAEQSGIIFIDEIDKIARSGQAASSADVSREGVQRDILPIVEGSTVMTKYGPVKTDHILFIAAGAFHMAKPSDLIPELQGRFPIRVELTKLSVDDFVKILVEPDNALIKQYKALLATEGINLEFSDDAIRKIAEVAFEVNQTTDNIGARRLHTIMEKLLEDLLFEAPDITLDEVVITPQYVEQKLGNIVKNKDLSEFIL.

ATP contacts are provided by residues Val19, 61–66 (GVGKTE), Asp277, Glu343, and Arg415.

Belongs to the ClpX chaperone family. HslU subfamily. A double ring-shaped homohexamer of HslV is capped on each side by a ring-shaped HslU homohexamer. The assembly of the HslU/HslV complex is dependent on binding of ATP.

Its subcellular location is the cytoplasm. Its function is as follows. ATPase subunit of a proteasome-like degradation complex; this subunit has chaperone activity. The binding of ATP and its subsequent hydrolysis by HslU are essential for unfolding of protein substrates subsequently hydrolyzed by HslV. HslU recognizes the N-terminal part of its protein substrates and unfolds these before they are guided to HslV for hydrolysis. The polypeptide is ATP-dependent protease ATPase subunit HslU (Geobacillus sp. (strain WCH70)).